A 189-amino-acid polypeptide reads, in one-letter code: Probable pericyclase scpY (189 aa).

It belongs to the pericyclase pydY family.

It participates in mycotoxin biosynthesis. Functionally, probable pericyclase; part of the gene scp cluster that mediates the biosynthesis of a hirsutellone-like compound that has still to be identified. In Mollisia scopiformis (Conifer needle endophyte fungus), this protein is Probable pericyclase scpY.